Reading from the N-terminus, the 184-residue chain is GTP-dependent dephospho-CoA kinase (184 aa).

Aspartate 33, valine 34, aspartate 52, lysine 54, and glutamate 103 together coordinate GTP.

Belongs to the GTP-dependent DPCK family.

It catalyses the reaction 3'-dephospho-CoA + GTP = GDP + CoA + H(+). The protein operates within cofactor biosynthesis; coenzyme A biosynthesis. Catalyzes the GTP-dependent phosphorylation of the 3'-hydroxyl group of dephosphocoenzyme A to form coenzyme A (CoA). The protein is GTP-dependent dephospho-CoA kinase of Ignicoccus hospitalis (strain KIN4/I / DSM 18386 / JCM 14125).